Consider the following 616-residue polypeptide: Vitamin B12 transporter BtuB (616 aa).

Positions 1-20 (MIKKISLLTALSVTAFSGWA) are cleaved as a signal peptide. The TonB box signature appears at 26–33 (DSLVVTAN). A TBDR plug domain is found at 38–152 (PVNTVLAPTS…IGGVVNIITT (115 aa)). Cyanocob(III)alamin contacts are provided by residues L83, S85, N92, and 110–111 (VT). Positions 155–616 (KDGTTLNAGI…EYTLSGSYTF (462 aa)) constitute a TBDR beta-barrel domain. 3 consecutive transmembrane segments (beta stranded) span residues 158 to 165 (TTLNAGIG), 169 to 178 (YQNYGGSTQQ), and 184 to 195 (TRVTLAGDYTYT). The Ca(2+) site is built by D199, Q211, D213, and D215. The next 2 membrane-spanning stretches (beta stranded) occupy residues 217-227 (FMNKTLYGALE) and 232-248 (DQWTGFVRGYGYSNRTA). Residues Y249, D250, and D263 each coordinate Ca(2+). 17 beta stranded membrane passes run 265 to 279 (RQLYSQTWDAGLRFN), 281 to 298 (DLFHSQLLSSYSHSKDYN), 311 to 327 (TLDEIKQYNVQWTNAVD), 330 to 339 (HGNIGAGVDW), 355 to 371 (YDLRNTGVYLTALQKFG), 373 to 383 (VTLEGAVRSDD), 387 to 402 (FGRHGTWQSSAAWEFI), 405 to 419 (YRFIASYGTAYKAPN), 436 to 445 (ESKQWEGAFE), 451 to 460 (VNWRVSAYRN), 475 to 492 (YYNVGKARIKGVEATASF), 496 to 511 (PLTHTLGYDYVDARNA), 519 to 531 (RRAKQQVKYQLDT), 537 to 552 (DWSLTYHYLGTRYDTD), 560 to 574 (NVKLGGVSLWDVAVS), 587 to 598 (IANLFDKDYETA), and 604 to 616 (AGREYTLSGSYTF). T311 serves as a coordination point for cyanocob(III)alamin. R519 contacts cyanocob(III)alamin. Residues 599-616 (YGYATAGREYTLSGSYTF) carry the TonB C-terminal box motif.

This sequence belongs to the TonB-dependent receptor family. BtuB (TC 1.B.14.3.1) subfamily.

The protein resides in the cell outer membrane. In terms of biological role, involved in the active translocation of vitamin B12 (cyanocobalamin) across the outer membrane to the periplasmic space. It derives its energy for transport by interacting with the trans-periplasmic membrane protein TonB. This is Vitamin B12 transporter BtuB from Cronobacter sakazakii (strain ATCC BAA-894) (Enterobacter sakazakii).